We begin with the raw amino-acid sequence, 202 residues long: Thymidylate kinase (202 aa).

7–14 provides a ligand contact to ATP; it reads GIDGSGKT.

This sequence belongs to the thymidylate kinase family.

It carries out the reaction dTMP + ATP = dTDP + ADP. Its function is as follows. Phosphorylation of dTMP to form dTDP in both de novo and salvage pathways of dTTP synthesis. The chain is Thymidylate kinase from Ehrlichia chaffeensis (strain ATCC CRL-10679 / Arkansas).